The following is a 275-amino-acid chain: Transcription factor JUNGBRUNNEN 1 (275 aa).

A disordered region spans residues 1–24 (MSGEGNLGKDHEEENEAPLPGFRF). An NAC domain is found at 18–167 (PLPGFRFHPT…VWTLCRIFKR (150 aa)). A DNA-binding region spans residues 115–173 (VGLKKSLVYYLGSAGKGTKTDWMMHEFRLPSTTKTDSPAQQAEVWTLCRIFKRVTSQRN). The disordered stretch occupies residues 191–219 (CSKTSSLDSDHTSHRTVDSMSHEPPLPQP). The segment covering 198 to 211 (DSDHTSHRTVDSMS) has biased composition (basic and acidic residues).

In terms of tissue distribution, expressed in roots, root caps, cotyledons, tips and margin of young leaves, senescent regions of fully expanded leaves and floral tissues, including old sepals, petals, staments, mature anthers and pollen grains. Not detected in the abscission zone of open flowers, emerging lateral roots and root meristematic zones.

The protein localises to the nucleus. Functionally, transcription factor that binds to the 5'- RRYGCCGT-3' consensus core sequence. Central longevity regulator. Negative regulator of leaf senescence. Modulates cellular H(2)O(2) levels and enhances tolerance to various abiotic stresses through the regulation of DREB2A. This Arabidopsis thaliana (Mouse-ear cress) protein is Transcription factor JUNGBRUNNEN 1 (JUB1).